Consider the following 268-residue polypeptide: Cyclohexadienyl dehydratase (268 aa).

The N-terminal stretch at 1-25 is a signal peptide; it reads MPKSFRHLVQALACLALLASASLQA.

It belongs to the bacterial solute-binding protein 3 family. Homodimer.

It localises to the periplasm. The enzyme catalyses prephenate + H(+) = 3-phenylpyruvate + CO2 + H2O. It carries out the reaction L-arogenate + H(+) = L-phenylalanine + CO2 + H2O. It participates in amino-acid biosynthesis; L-phenylalanine biosynthesis; L-phenylalanine from L-arogenate: step 1/1. Its pathway is amino-acid biosynthesis; L-phenylalanine biosynthesis; phenylpyruvate from prephenate: step 1/1. Its function is as follows. Forms alternative pathway for phenylalanine biosynthesis. Can catalyze two reactions: prephenate dehydratase and arogenate dehydratase. May have a role in chemotaxis or transport. This chain is Cyclohexadienyl dehydratase (pheC), found in Pseudomonas aeruginosa (strain ATCC 15692 / DSM 22644 / CIP 104116 / JCM 14847 / LMG 12228 / 1C / PRS 101 / PAO1).